Consider the following 95-residue polypeptide: Small ribosomal subunit protein bS18 (95 aa).

The protein belongs to the bacterial ribosomal protein bS18 family. Part of the 30S ribosomal subunit. Forms a tight heterodimer with protein bS6.

Functionally, binds as a heterodimer with protein bS6 to the central domain of the 16S rRNA, where it helps stabilize the platform of the 30S subunit. In Ehrlichia canis (strain Jake), this protein is Small ribosomal subunit protein bS18.